The following is a 265-amino-acid chain: Sarcotoxin II-1 (265 aa).

Positions 1–22 are cleaved as a signal peptide; it reads MKSFVLFAACMAIIALGSLAHA. Residues 23–24 constitute a propeptide, removed by a dipeptidylpeptidase; that stretch reads YP. The residue at position 25 (glutamine 25) is a Pyrrolidone carboxylic acid. Residue glycine 264 is modified to Glycine amide.

It belongs to the attacin/sarcotoxin-2 family. In terms of tissue distribution, synthesized by the fat body and is eventually secreted into the hemolymph.

It localises to the secreted. Its function is as follows. Sarcotoxin II is an antibacterial protein which plays a role in the inflammatory response of this insect. The main effect of sarcotoxin II on E.coli may be the inhibition of cell wall synthesis, including septum formation. The sequence is that of Sarcotoxin II-1 from Sarcophaga peregrina (Flesh fly).